We begin with the raw amino-acid sequence, 225 residues long: UPF0758 protein BCG9842_B0662 (225 aa).

Positions 103-225 (SIRSPEDCAK…FVSLKEKGHI (123 aa)) constitute an MPN domain. H174, H176, and D187 together coordinate Zn(2+). A JAMM motif motif is present at residues 174–187 (HNHPSGDPTPSRED).

Belongs to the UPF0758 family.

This Bacillus cereus (strain G9842) protein is UPF0758 protein BCG9842_B0662.